The sequence spans 262 residues: Zinc import ATP-binding protein ZnuC (262 aa).

Residues 6 to 221 (IRLDKVAVTL…PAFVELFGKN (216 aa)) enclose the ABC transporter domain. Position 38-45 (38-45 (GPNGAGKT)) interacts with ATP.

Belongs to the ABC transporter superfamily. Zinc importer (TC 3.A.1.15.5) family. The complex is composed of two ATP-binding proteins (ZnuC), two transmembrane proteins (ZnuB) and a solute-binding protein (ZnuA).

The protein localises to the cell inner membrane. The catalysed reaction is Zn(2+)(out) + ATP(in) + H2O(in) = Zn(2+)(in) + ADP(in) + phosphate(in) + H(+)(in). Its function is as follows. Part of the ABC transporter complex ZnuABC involved in zinc import. Responsible for energy coupling to the transport system. This is Zinc import ATP-binding protein ZnuC from Pseudomonas syringae pv. syringae (strain B728a).